Here is a 307-residue protein sequence, read N- to C-terminus: Porphobilinogen deaminase (307 aa).

Residue Cys-239 is modified to S-(dipyrrolylmethanemethyl)cysteine.

The protein belongs to the HMBS family. Monomer. It depends on dipyrromethane as a cofactor.

It carries out the reaction 4 porphobilinogen + H2O = hydroxymethylbilane + 4 NH4(+). It functions in the pathway porphyrin-containing compound metabolism; protoporphyrin-IX biosynthesis; coproporphyrinogen-III from 5-aminolevulinate: step 2/4. Tetrapolymerization of the monopyrrole PBG into the hydroxymethylbilane pre-uroporphyrinogen in several discrete steps. In Campylobacter jejuni subsp. jejuni serotype O:6 (strain 81116 / NCTC 11828), this protein is Porphobilinogen deaminase.